Reading from the N-terminus, the 342-residue chain is Flagellar P-ring protein (342 aa).

An N-terminal signal peptide occupies residues 1–19; the sequence is MKRVFLWLIFVLAFHKLLA.

The protein belongs to the FlgI family. As to quaternary structure, the basal body constitutes a major portion of the flagellar organelle and consists of four rings (L,P,S, and M) mounted on a central rod.

It is found in the periplasm. The protein localises to the bacterial flagellum basal body. Its function is as follows. Assembles around the rod to form the L-ring and probably protects the motor/basal body from shearing forces during rotation. The sequence is that of Flagellar P-ring protein from Helicobacter pylori (strain P12).